The primary structure comprises 857 residues: Protein app1 (857 aa).

The 128-residue stretch at 6 to 133 (DTSTHGAEIR…NMDDIIRRVA (128 aa)) folds into the ADF-H domain. Disordered regions lie at residues 167–562 (AKVA…VPQR), 585–622 (EVPS…VPQR), and 693–723 (QLNE…TEHT). Over residues 193–204 (KDSKDNSWDDSS) the composition is skewed to basic and acidic residues. Residues 205 to 217 (KQSNTQTANTTSN) show a composition bias toward low complexity. A compositionally biased stretch (basic and acidic residues) spans 229–240 (AGRKEKSQENKP). Polar residues-rich tracts occupy residues 276-295 (SIST…SHAP), 371-385 (PPAS…SPST), 399-409 (KQVSSNETSAQ), 443-452 (KISSFNSKAG), and 498-511 (SSAS…SVIT). Over residues 522–561 (VVPEAPSVHQPPAAPVAPEVPSAPQRPAAPVVPEAPSVPQ) the composition is skewed to low complexity. 2 stretches are compositionally biased toward pro residues: residues 587 to 596 (PSVPQPPVAP) and 602 to 611 (PSVPQPPVAP). Over residues 612 to 622 (VAPEVPSVPQR) the composition is skewed to low complexity. 2 SH3 domains span residues 725–785 (PTKT…ITGP) and 800–857 (GPGK…VEEI).

This is Protein app1 (app1) from Schizosaccharomyces pombe (strain 972 / ATCC 24843) (Fission yeast).